Reading from the N-terminus, the 1268-residue chain is Meiosis inhibitor protein 1 (1268 aa).

Strongly expressed in testis, weakly in brain, and not detected in spleen, liver, kidney, small intestine or colon.

Functionally, required for normal meiotic chromosome synapsis. May be involved in the formation of meiotic double-strand breaks (DSBs) in spermatocytes. This Mus musculus (Mouse) protein is Meiosis inhibitor protein 1.